The chain runs to 380 residues: Pregnancy-associated glycoprotein 1 (380 aa).

The first 15 residues, M1–C15, serve as a signal peptide directing secretion. The propeptide at I16–F53 is activation peptide. 2 N-linked (GlcNAc...) asparagine glycosylation sites follow: N57 and N74. One can recognise a Peptidase A1 domain in the interval Y71–A377. D89 is an active-site residue. A disulfide bond links C102 and C107. N125 and N182 each carry an N-linked (GlcNAc...) asparagine glycan. C261 and C265 are oxidised to a cystine. D270 is a catalytic residue. Cysteines 303 and 337 form a disulfide.

Belongs to the peptidase A1 family. Post-translationally, N-Glycosylated; the glycans terminate in either N-acetyl-galactosamine (GalNAc) or N-acetyllactosamine. Terminal GalNAc on Asn-linked glycans is greatly reduced prior to parturition while lactosamine-type N-glycans remain unaltered. In terms of tissue distribution, trophoblast and placental tissue. Produced specifically in the invasive binucleate cells of the placenta. Becomes detectable in maternal serum soon after implantation.

The protein localises to the secreted. Its subcellular location is the extracellular space. In terms of biological role, appears to be proteolytically inactive. In Bos taurus (Bovine), this protein is Pregnancy-associated glycoprotein 1.